The following is a 438-amino-acid chain: Histidinol dehydrogenase (438 aa).

NAD(+)-binding residues include tyrosine 138, glutamine 199, and asparagine 222. Residues serine 245, glutamine 267, and histidine 270 each coordinate substrate. Residues glutamine 267 and histidine 270 each contribute to the Zn(2+) site. Residues glutamate 335 and histidine 336 each act as proton acceptor in the active site. Residues histidine 336, aspartate 369, glutamate 423, and histidine 428 each coordinate substrate. Residue aspartate 369 coordinates Zn(2+). Histidine 428 is a Zn(2+) binding site.

This sequence belongs to the histidinol dehydrogenase family. The cofactor is Zn(2+).

It carries out the reaction L-histidinol + 2 NAD(+) + H2O = L-histidine + 2 NADH + 3 H(+). It participates in amino-acid biosynthesis; L-histidine biosynthesis; L-histidine from 5-phospho-alpha-D-ribose 1-diphosphate: step 9/9. Its function is as follows. Catalyzes the sequential NAD-dependent oxidations of L-histidinol to L-histidinaldehyde and then to L-histidine. This chain is Histidinol dehydrogenase, found in Burkholderia lata (strain ATCC 17760 / DSM 23089 / LMG 22485 / NCIMB 9086 / R18194 / 383).